We begin with the raw amino-acid sequence, 434 residues long: Adenylosuccinate synthetase (434 aa).

Residues 13 to 19 (GDEGKGK) and 41 to 43 (GHT) each bind GTP. Asp14 functions as the Proton acceptor in the catalytic mechanism. 2 residues coordinate Mg(2+): Asp14 and Gly41. IMP contacts are provided by residues 14–17 (DEGK), 39–42 (NAGH), Thr133, Arg147, Gln228, Thr243, and Arg307. The Proton donor role is filled by His42. Position 303–309 (303–309 (STTGRKR)) interacts with substrate. GTP-binding positions include Arg309, 335-337 (KID), and 417-419 (STG).

Belongs to the adenylosuccinate synthetase family. In terms of assembly, homodimer. Requires Mg(2+) as cofactor.

The protein localises to the cytoplasm. The catalysed reaction is IMP + L-aspartate + GTP = N(6)-(1,2-dicarboxyethyl)-AMP + GDP + phosphate + 2 H(+). The protein operates within purine metabolism; AMP biosynthesis via de novo pathway; AMP from IMP: step 1/2. In terms of biological role, plays an important role in the de novo pathway of purine nucleotide biosynthesis. Catalyzes the first committed step in the biosynthesis of AMP from IMP. This chain is Adenylosuccinate synthetase, found in Wigglesworthia glossinidia brevipalpis.